We begin with the raw amino-acid sequence, 549 residues long: MDDDQQFCLRWNNHQSTLISVFDTLLENETLVDCTLAAEGKFLKAHKVVLSACSPYFATLLQEQYDKHPIFILKDVKYQELRAMMDYMYRGEVNISQDQLAALLKAAESLQIKGLSDNRTGGGVAPKPESSGHHRGGKLSGAYTLEQTKRARLATGGAMDTSGDVSGSREGSSSPSRRRRKVRRRSMENDAHDNSNSSVLQAAASNQSILQQTGAGLAVSALVTTQLSSGPAAGTSSQASSTQQQQPLTSTNVTKKTESAKLTSSTAAPASGASASAAVQQAHLHQQQAQTTSDAINTENVQAQSQGGAQGVQGDDEDIDEGSAVGGPNSATGPNPASASASAVHAGVVVKQLASVVDKSSSNHKHKIKDNSVSSVGSEMVIEPKAEYDDDAHDENVEDLTLDEEDMTMEELDQTAGTSQGGEGSSQTYATWQHDRSQDELGLMAQDAQQRDPQDVSTNQTVVLPHYSIYHYYSNIYYLLSHTTIYEADRTVSVSCPGKLNCLPQRNDLQETKSVTVLYTIHFFLYILMIYIFVLCKILPRIVFVWVST.

Positions 32–97 constitute a BTB domain; the sequence is VDCTLAAEGK…MYRGEVNISQ (66 aa). Disordered stretches follow at residues 115–200 and 228–340; these read LSDN…SSVL and SSGP…ASAS. Low complexity-rich tracts occupy residues 162-175, 228-251, 263-293, and 329-340; these read SGDVSGSREGSSSP, SSGPAAGTSSQASSTQQQQPLTST, TSSTAAPASGASASAAVQQAHLHQQQAQTTS, and NSATGPNPASAS.

Mostly neuronal.

Its subcellular location is the nucleus. In terms of biological role, putative transcription factor required for axon growth and guidance in the central and peripheral nervous systems. Repels CNS axons away from the midline by promoting the expression of the midline repellent sli and its receptor robo. The protein is Longitudinals lacking protein, isoforms H/M/V of Drosophila melanogaster (Fruit fly).